The sequence spans 82 residues: MRFHWIPTLTVLLVLSMSFGTEAIPXXXXXXXXXXXXXXXXXXXXXXXSEVLECYFECGNWEGTCCDTGICVGIHNCKIPEN.

The first 23 residues, 1–23 (MRFHWIPTLTVLLVLSMSFGTEA), serve as a signal peptide directing secretion. Residues 24–48 (IPXXXXXXXXXXXXXXXXXXXXXXX) constitute a propeptide that is removed on maturation. Disulfide bonds link Cys54–Cys66, Cys58–Cys71, and Cys65–Cys77.

Expressed by the venom duct.

The protein localises to the secreted. Acts as a neurotoxin by inhibiting an ion channel. This chain is Turripeptide Lol6.1, found in Iotyrris olangoensis (Sea snail).